The sequence spans 336 residues: Holliday junction branch migration complex subunit RuvB (336 aa).

Positions 2-186 (QDQEEERMIT…FGVICKLELY (185 aa)) are large ATPase domain (RuvB-L). ATP-binding positions include Leu25, Arg26, Gly67, Lys70, Thr71, Thr72, 133–135 (EDF), Arg176, Tyr186, and Arg223. Thr71 contributes to the Mg(2+) binding site. Residues 187 to 257 (NNKQLTAIVK…VAEEALILLE (71 aa)) are small ATPAse domain (RuvB-S). Residues 260–336 (SLGLDNTDKK…YEHFNIPSAE (77 aa)) form a head domain (RuvB-H) region. Residues Arg296, Arg315, and Arg320 each contribute to the DNA site.

The protein belongs to the RuvB family. Homohexamer. Forms an RuvA(8)-RuvB(12)-Holliday junction (HJ) complex. HJ DNA is sandwiched between 2 RuvA tetramers; dsDNA enters through RuvA and exits via RuvB. An RuvB hexamer assembles on each DNA strand where it exits the tetramer. Each RuvB hexamer is contacted by two RuvA subunits (via domain III) on 2 adjacent RuvB subunits; this complex drives branch migration. In the full resolvosome a probable DNA-RuvA(4)-RuvB(12)-RuvC(2) complex forms which resolves the HJ.

Its subcellular location is the cytoplasm. The catalysed reaction is ATP + H2O = ADP + phosphate + H(+). In terms of biological role, the RuvA-RuvB-RuvC complex processes Holliday junction (HJ) DNA during genetic recombination and DNA repair, while the RuvA-RuvB complex plays an important role in the rescue of blocked DNA replication forks via replication fork reversal (RFR). RuvA specifically binds to HJ cruciform DNA, conferring on it an open structure. The RuvB hexamer acts as an ATP-dependent pump, pulling dsDNA into and through the RuvAB complex. RuvB forms 2 homohexamers on either side of HJ DNA bound by 1 or 2 RuvA tetramers; 4 subunits per hexamer contact DNA at a time. Coordinated motions by a converter formed by DNA-disengaged RuvB subunits stimulates ATP hydrolysis and nucleotide exchange. Immobilization of the converter enables RuvB to convert the ATP-contained energy into a lever motion, pulling 2 nucleotides of DNA out of the RuvA tetramer per ATP hydrolyzed, thus driving DNA branch migration. The RuvB motors rotate together with the DNA substrate, which together with the progressing nucleotide cycle form the mechanistic basis for DNA recombination by continuous HJ branch migration. Branch migration allows RuvC to scan DNA until it finds its consensus sequence, where it cleaves and resolves cruciform DNA. The chain is Holliday junction branch migration complex subunit RuvB from Alkaliphilus metalliredigens (strain QYMF).